The sequence spans 135 residues: Membrane-anchored ubiquitin-fold protein 4 (135 aa).

A disordered region spans residues 1-20 (MAEKEEGKVAAEGGAEAEAD). One can recognise a Ubiquitin-like domain in the interval 23-92 (VEVKFRLFDG…NDKNIAQCRA (70 aa)). Position 132 is a cysteine methyl ester (Cys-132). A lipid anchor (S-geranylgeranyl cysteine) is attached at Cys-132. The propeptide at 133–135 (TIL) is removed in mature form.

The protein localises to the cell membrane. May serve as docking site to facilitate the association of other proteins to the plasma membrane. The polypeptide is Membrane-anchored ubiquitin-fold protein 4 (MUB4) (Oryza sativa subsp. japonica (Rice)).